A 398-amino-acid chain; its full sequence is Phosphoglycerate kinase (398 aa).

Residues 21 to 23 (DFN), Arg-36, 59 to 62 (HLGR), Arg-119, and Arg-157 each bind substrate. Residues Lys-208, Gly-296, Glu-327, and 354-357 (GGDS) each bind ATP.

This sequence belongs to the phosphoglycerate kinase family. Monomer.

Its subcellular location is the cytoplasm. The catalysed reaction is (2R)-3-phosphoglycerate + ATP = (2R)-3-phospho-glyceroyl phosphate + ADP. It functions in the pathway carbohydrate degradation; glycolysis; pyruvate from D-glyceraldehyde 3-phosphate: step 2/5. The protein is Phosphoglycerate kinase (pgk) of Lactococcus lactis subsp. lactis (strain IL1403) (Streptococcus lactis).